An 89-amino-acid polypeptide reads, in one-letter code: Cell division protein FtsL (89 aa).

Topologically, residues 1–22 (MIDRKHYHLVGSIGKDILNNGK) are cytoplasmic. A helical membrane pass occupies residues 23–40 (LPALLLIAVLASSSLVVI). At 41–89 (TTYQTRRLTVEREQLLLEQNILDIEWRNLILEDNVISDQSRFEFVATEQ) the chain is on the periplasmic side.

The protein belongs to the FtsL family. In terms of assembly, part of a complex composed of FtsB, FtsL and FtsQ.

It localises to the cell inner membrane. Its function is as follows. Essential cell division protein. May link together the upstream cell division proteins, which are predominantly cytoplasmic, with the downstream cell division proteins, which are predominantly periplasmic. In Moranella endobia (strain PCIT), this protein is Cell division protein FtsL.